The primary structure comprises 211 residues: Urease accessory protein UreG (211 aa).

11 to 18 contributes to the GTP binding site; the sequence is GPVGSGKT.

It belongs to the SIMIBI class G3E GTPase family. UreG subfamily. Homodimer. UreD, UreF and UreG form a complex that acts as a GTP-hydrolysis-dependent molecular chaperone, activating the urease apoprotein by helping to assemble the nickel containing metallocenter of UreC. The UreE protein probably delivers the nickel.

The protein resides in the cytoplasm. Its function is as follows. Facilitates the functional incorporation of the urease nickel metallocenter. This process requires GTP hydrolysis, probably effectuated by UreG. The chain is Urease accessory protein UreG from Photorhabdus laumondii subsp. laumondii (strain DSM 15139 / CIP 105565 / TT01) (Photorhabdus luminescens subsp. laumondii).